Here is a 436-residue protein sequence, read N- to C-terminus: Tryptophan synthase beta chain (436 aa).

Lys129 is modified (N6-(pyridoxal phosphate)lysine).

It belongs to the TrpB family. In terms of assembly, tetramer of two alpha and two beta chains. Pyridoxal 5'-phosphate is required as a cofactor.

The enzyme catalyses (1S,2R)-1-C-(indol-3-yl)glycerol 3-phosphate + L-serine = D-glyceraldehyde 3-phosphate + L-tryptophan + H2O. Its pathway is amino-acid biosynthesis; L-tryptophan biosynthesis; L-tryptophan from chorismate: step 5/5. Its function is as follows. The beta subunit is responsible for the synthesis of L-tryptophan from indole and L-serine. This chain is Tryptophan synthase beta chain, found in Prochlorococcus marinus (strain MIT 9313).